The following is a 242-amino-acid chain: Aquaporin (242 aa).

The Cytoplasmic portion of the chain corresponds to 1–11; sequence MNTSTKLICQK. The chain crosses the membrane as a helical span at residues 12–32; sequence LFAEMLCSCIFGFAVYSAILN. Residues 33-39 are Extracellular-facing; that stretch reads TKASNSS. Residues 40–60 traverse the membrane as a helical segment; sequence ISSTTVGLTVCFSSISLIYTF. Residues 61–83 are Cytoplasmic-facing; sequence CDHSVAHFNPAITIAAICTGKLD. Positions 69 to 71 match the NPA motif; it reads NPA. Residues 84–104 form a helical membrane-spanning segment; it reads ILLGIGYVIAQLIGFILATLL. Topologically, residues 105–133 are extracellular; the sequence is TVVCFPYGYLKTMEFIASARISDDISTVN. The helical transmembrane segment at 134-154 threads the bilayer; that stretch reads LFFTEFILSFILVFIAFEVGI. Residues 155-175 are Cytoplasmic-facing; that stretch reads NAIREPGVTLFVGIKQIDRSK. Residues 176–196 traverse the membrane as a helical segment; sequence FAPLTIGITLGFLAFLASTTS. Residues 197 to 217 are Extracellular-facing; it reads GGAFNPGIVWGPAIMGGNFDD. Positions 201–203 match the NPG motif; it reads NPG. The helical transmembrane segment at 218 to 238 threads the bilayer; the sequence is FVIYIISELSGGLLGAFIQVF. Over 239 to 242 the chain is Cytoplasmic; it reads LLFK.

The protein belongs to the MIP/aquaporin (TC 1.A.8) family.

It localises to the cell membrane. Functionally, water channel required to facilitate the transport of water across membranes. Involved in osmotolerance. The protein is Aquaporin (AQP) of Enterocytozoon bieneusi (strain H348) (Microsporidian parasite).